Reading from the N-terminus, the 335-residue chain is Replication factor C subunit 4 (335 aa).

56–63 (SGPPGTGK) provides a ligand contact to ATP.

The protein belongs to the activator 1 small subunits family. Heterotetramer of subunits RFC2, RFC3, RFC4 and RFC5 that can form a complex with RFC1. Expressed in roots, leaves, shoot apical meristem (SAM), flag leaves and panicles.

The protein localises to the nucleus. May be involved in DNA replication and thus regulate cell proliferation. The polypeptide is Replication factor C subunit 4 (RFC4) (Oryza sativa subsp. japonica (Rice)).